The primary structure comprises 492 residues: Alpha/beta hydrolase ucsC (492 aa).

Residue Ser-258 is the Nucleophile of the active site.

The protein belongs to the AB hydrolase superfamily. FUS2 hydrolase family. As to quaternary structure, homodimer.

It participates in mycotoxin biosynthesis. In terms of biological role, alpha/beta hydrolase; part of the gene cluster that mediates the biosynthesis of UCS1025A, a member of the pyrrolizidinone family that acts as a strong telomerase inhibitor and displays potent antibacterial and antitumor properties. These compounds share a hemiaminal-containing pyrrolizidinone core fused with a gamma-lactone, giving a furopyrrolizidine that is connected to a decalin fragment. The polyketide synthase module (PKS) of the PKS-NRPS ucsA is responsible for the synthesis of the polyketide backbone via the condensation of an acetyl-CoA starter unit with 6 malonyl-CoA units. The downstream nonribosomal peptide synthetase (NRPS) module then amidates the carboxyl end of the polyketide with a 2S,3S-methylproline derived from L-isoleucine by the 2-oxoglutarate-dependent dioxygenase ucsF which converts L-isoleucine to (4S,5S)-4-methylpyrroline-5-carboxylate that is further converted to 2S,3S-methylproline by the pyrroline-5-carboxylate reductase ucsG. Reductive release of the completed aminoacyl polyketide from the assembly line can form the 3-pyrrolin-2-one structure via an intramolecular Knoevenagel reaction. Because ucsA lacks a designated enoylreductase (ER) domain, the required activity is provided the enoyl reductase ucsL. This keto acyclic precursor is the substrate of the Diels-Alderase ucsH, that catalyzes the Diels-Alder cycloaddition. Oxidation of the 3S-methyl group to a carboxylate by the cytochrome P450 monooxygenase ucsK allows an oxa-Michael cyclization that might involve the reductase/dehydrogenase ucsI and which furnishes the furopyrrolizidine. The oxidase ucsJ likely plays a critical role in stereoselective reduction of the C5-C6 double bond to afford the required R-configured carboxylate group. Further enolization and oxidation at C5 by an unidentified enzyme affords the last intermediate that can undergo oxa-Michael cyclization to yield UCS1025A. The chain is Alpha/beta hydrolase ucsC from Acremonium sp.